Reading from the N-terminus, the 21-residue chain is MKVSIEINGTTVSXEVXDRTL.

In terms of assembly, heterotetramer composed of an alpha, a beta and two gamma chains. [2Fe-2S] cluster is required as a cofactor.

Functionally, active with aldehydes and formate esters as substrates. The chain is DYE-linked aldehyde dehydrogenase, gamma chain from Amycolatopsis methanolica.